A 179-amino-acid polypeptide reads, in one-letter code: MNQPNSLYLALLIEAKWQNPEDFHFSSDFAKHWLLEQGSLSRRLARHCQHLTVELMRNEKSGVGQLTMQETQGLSPEICLIREVVLSGDQTPWVLGRTLIPETTLADQPYDLATLGDIPLGLTVFSAEQVERDALQVAWIETPQGRLLARRSRLWMNHKPMLVAELFLPDAPIYSRESV.

Substrate contacts are provided by R82, L120, and E165.

It belongs to the UbiC family.

The protein resides in the cytoplasm. The catalysed reaction is chorismate = 4-hydroxybenzoate + pyruvate. Its pathway is cofactor biosynthesis; ubiquinone biosynthesis. Functionally, removes the pyruvyl group from chorismate, with concomitant aromatization of the ring, to provide 4-hydroxybenzoate (4HB) for the ubiquinone pathway. This is Probable chorismate pyruvate-lyase from Vibrio vulnificus (strain YJ016).